Consider the following 154-residue polypeptide: Myoglobin (154 aa).

Positions 2 to 148 (GLSDAEWQLV…FRNDIAAQYK (147 aa)) constitute a Globin domain. S4 carries the phosphoserine modification. H65 lines the nitrite pocket. H65 serves as a coordination point for O2. T68 is modified (phosphothreonine). Heme b is bound at residue H94.

The protein belongs to the globin family. Monomeric.

It localises to the cytoplasm. It is found in the sarcoplasm. The catalysed reaction is Fe(III)-heme b-[protein] + nitric oxide + H2O = Fe(II)-heme b-[protein] + nitrite + 2 H(+). It catalyses the reaction H2O2 + AH2 = A + 2 H2O. In terms of biological role, monomeric heme protein which primary function is to store oxygen and facilitate its diffusion within muscle tissues. Reversibly binds oxygen through a pentacoordinated heme iron and enables its timely and efficient release as needed during periods of heightened demand. Depending on the oxidative conditions of tissues and cells, and in addition to its ability to bind oxygen, it also has a nitrite reductase activity whereby it regulates the production of bioactive nitric oxide. Under stress conditions, like hypoxia and anoxia, it also protects cells against reactive oxygen species thanks to its pseudoperoxidase activity. The protein is Myoglobin (MB) of Oryctolagus cuniculus (Rabbit).